The chain runs to 296 residues: Bifunctional protein FolD (296 aa).

Residues Gly-168–Ser-170, Ser-197, and Thr-238 contribute to the NADP(+) site.

This sequence belongs to the tetrahydrofolate dehydrogenase/cyclohydrolase family. As to quaternary structure, homodimer.

It carries out the reaction (6R)-5,10-methylene-5,6,7,8-tetrahydrofolate + NADP(+) = (6R)-5,10-methenyltetrahydrofolate + NADPH. The catalysed reaction is (6R)-5,10-methenyltetrahydrofolate + H2O = (6R)-10-formyltetrahydrofolate + H(+). It functions in the pathway one-carbon metabolism; tetrahydrofolate interconversion. Its function is as follows. Catalyzes the oxidation of 5,10-methylenetetrahydrofolate to 5,10-methenyltetrahydrofolate and then the hydrolysis of 5,10-methenyltetrahydrofolate to 10-formyltetrahydrofolate. In Porphyromonas gingivalis (strain ATCC BAA-308 / W83), this protein is Bifunctional protein FolD.